Reading from the N-terminus, the 570-residue chain is Small ribosomal subunit protein bS1 (570 aa).

S1 motif domains follow at residues 52–116 (GAIL…LSRE), 134–199 (GSIV…VSRR), 220–288 (GERR…LGLK), 305–375 (GKRV…LGLK), 392–462 (GLRV…LGVK), and 479–548 (GSDI…LSIK).

The protein belongs to the bacterial ribosomal protein bS1 family.

In terms of biological role, binds mRNA; thus facilitating recognition of the initiation point. It is needed to translate mRNA with a short Shine-Dalgarno (SD) purine-rich sequence. This is Small ribosomal subunit protein bS1 (rpsA) from Chlamydia muridarum (strain MoPn / Nigg).